We begin with the raw amino-acid sequence, 569 residues long: Hemin/hemoglobin-binding protein 2 (569 aa).

Residues Met1–Ala28 form the signal peptide. NEAT domains are found at residues Lys34–Ile173, Leu184–Ala307, and Leu360–Ile484. Heme is bound by residues Ser204–Ser205, Tyr280, and Tyr289. Residues Ala307–Lys357 are disordered. The span at Thr502–Ala511 shows a compositional bias: polar residues. The segment at Thr502–Ala537 is disordered. Residues Asn536–Asn540 carry the NXZTN sorting signal motif. Thr539 carries the post-translational modification Pentaglycyl murein peptidoglycan amidated threonine. Residues Asn540–Ser569 constitute a propeptide, removed by sortase B.

It localises to the cell surface. The protein localises to the secreted. Its subcellular location is the cell wall. Is overexpressed in mecA, clpC and clpP mutants, suggesting the protein level is controlled by MecA, ClpC and ClpP (at protein level). Acts as an extracellular and cell wall-bound hemophore; scavenges host heme and hemoglobin from the environment and also serves as a cell wall receptor for both. At low hemin (Hn) and hemoglobin (Hb) concentrations adsorbs Hn/Hb and presumably directs it to membrane transporters. Soluble Hbp2 can probably pass Hn/Hb to cell wall-anchored Hbp2, and both forms can accept Hn/Hb from Hbp1. May be involved in crossing the digestive barrier in infected animals. Binds host hemin. Binds host hemoglobin with affinity in the nanomolar range. The polypeptide is Hemin/hemoglobin-binding protein 2 (Listeria monocytogenes serovar 1/2a (strain ATCC BAA-679 / EGD-e)).